Here is a 1024-residue protein sequence, read N- to C-terminus: P3N-PIPO polyprotein (1024 aa).

The Peptidase S30 domain maps to 165–308 (RMSEASLQLF…KKQSNEIIHY (144 aa)). Catalysis depends on for P1 proteinase activity residues histidine 216, aspartate 225, and serine 259. Residues 360–363 (KITC) carry the Involved in interaction with stylet and aphid transmission motif. The Involved in virions binding and aphid transmission signature appears at 619 to 621 (PTK). One can recognise a Peptidase C6 domain in the interval 645–767 (MFIAKAGYCY…DSNMKTYLVG (123 aa)). Residues cysteine 653 and histidine 726 each act as for helper component proteinase activity in the active site.

Belongs to the potyviridae P3N-PIPO polyprotein family. In terms of assembly, interacts (via PIPO domain) with host PCaP1 protein; this interaction may help to anchor the movement complex to the plasma membrane from which the complex could move to the plasmodesmata. In terms of processing, potyviral RNA is expressed as two polyproteins which undergo post-translational proteolytic processing. Genome polyprotein is processed by NIa-pro, P1 and HC-pro proteinases resulting in the production of at least ten individual proteins. P3N-PIPO is cleaved by P1 and HC-pro proteinases resulting in the production of three individual proteins. The P1 proteinase and the HC-pro cleave only their respective C-termini autocatalytically.

The protein localises to the host cell junction. The protein resides in the host plasmodesma. It carries out the reaction Hydrolyzes a Gly-|-Gly bond at its own C-terminus, commonly in the sequence -Tyr-Xaa-Val-Gly-|-Gly, in the processing of the potyviral polyprotein.. Functionally, required for aphid transmission and also has proteolytic activity. Only cleaves a Gly-Gly dipeptide at its own C-terminus. Interacts with virions and aphid stylets. Acts as a suppressor of RNA-mediated gene silencing, also known as post-transcriptional gene silencing (PTGS), a mechanism of plant viral defense that limits the accumulation of viral RNAs. May have RNA-binding activity. Its function is as follows. Allows efficient cell to cell propagation, by bypassing the host cell wall barrier. Transports viral genome to neighboring plant cells directly through plasmosdesmata, without any budding. This is P3N-PIPO polyprotein from Plum pox potyvirus (strain D) (PPV).